The primary structure comprises 171 residues: Shikimate kinase (171 aa).

14 to 19 is a binding site for ATP; it reads GAGKST. Mg(2+) is bound at residue Ser18. Substrate contacts are provided by Asp36, Arg60, and Gly82. Arg120 is an ATP binding site. Arg139 is a binding site for substrate. Gln156 contributes to the ATP binding site.

This sequence belongs to the shikimate kinase family. As to quaternary structure, monomer. The cofactor is Mg(2+).

The protein resides in the cytoplasm. It carries out the reaction shikimate + ATP = 3-phosphoshikimate + ADP + H(+). Its pathway is metabolic intermediate biosynthesis; chorismate biosynthesis; chorismate from D-erythrose 4-phosphate and phosphoenolpyruvate: step 5/7. Its function is as follows. Catalyzes the specific phosphorylation of the 3-hydroxyl group of shikimic acid using ATP as a cosubstrate. In Shewanella woodyi (strain ATCC 51908 / MS32), this protein is Shikimate kinase.